We begin with the raw amino-acid sequence, 319 residues long: Formimidoylglutamase (319 aa).

Residues His-131, Asp-154, His-156, Asp-158, Cys-248, and Asp-250 each coordinate Mn(2+).

Belongs to the arginase family. Mn(2+) is required as a cofactor.

The catalysed reaction is N-formimidoyl-L-glutamate + H2O = formamide + L-glutamate. Its pathway is amino-acid degradation; L-histidine degradation into L-glutamate; L-glutamate from N-formimidoyl-L-glutamate (hydrolase route): step 1/1. Catalyzes the conversion of N-formimidoyl-L-glutamate to L-glutamate and formamide. The protein is Formimidoylglutamase of Legionella pneumophila (strain Lens).